A 529-amino-acid chain; its full sequence is GMP synthase [glutamine-hydrolyzing] (529 aa).

Residues 3–204 (TVAIVDFGSQ…FLKIAGCTRD (202 aa)) form the Glutamine amidotransferase type-1 domain. The active-site Nucleophile is the cysteine 87. Catalysis depends on residues histidine 179 and glutamate 181. One can recognise a GMPS ATP-PPase domain in the interval 205–395 (WTMGSFLHTQ…LGLPSAILDR (191 aa)). Residue 232–238 (SGGVDSS) participates in ATP binding.

In terms of assembly, homodimer.

It carries out the reaction XMP + L-glutamine + ATP + H2O = GMP + L-glutamate + AMP + diphosphate + 2 H(+). It participates in purine metabolism; GMP biosynthesis; GMP from XMP (L-Gln route): step 1/1. Catalyzes the synthesis of GMP from XMP. The chain is GMP synthase [glutamine-hydrolyzing] from Anaplasma marginale (strain St. Maries).